A 334-amino-acid chain; its full sequence is Small ribosomal subunit protein RACK1z (334 aa).

WD repeat units lie at residues 16 to 47, 73 to 103, 115 to 145, 163 to 195, 207 to 237, 248 to 277, and 296 to 326; these read GHND…LVWD, GHSH…RLWD, GHDK…KLWN, GHNG…KVWN, GHGG…LLWD, DAGS…KIWD, and NQML…RIYK.

Belongs to the WD repeat G protein beta family. Ribosomal protein RACK1 subfamily. In terms of assembly, interacts with RAC1, RAC3, RAC6, RAR1, SGT1 and RBOHB. Homodimer and heterodimer with RACK1B. In terms of tissue distribution, widely expressed.

The protein localises to the cytoplasm. It localises to the cell membrane. Functionally, component of the RACK1 regulatory proteins that functions in innate immunity by interacting with multiple proteins in the RAC1 immune complex. Acts as a positive regulator of reactive oxygen species (ROS) production and is required for resistance against rice blast (M.grisea) infection. The protein is Small ribosomal subunit protein RACK1z (RACK1A) of Oryza sativa subsp. japonica (Rice).